Consider the following 93-residue polypeptide: Integration host factor subunit beta (93 aa).

This sequence belongs to the bacterial histone-like protein family. As to quaternary structure, heterodimer of an alpha and a beta chain.

This protein is one of the two subunits of integration host factor, a specific DNA-binding protein that functions in genetic recombination as well as in transcriptional and translational control. The protein is Integration host factor subunit beta of Vibrio parahaemolyticus serotype O3:K6 (strain RIMD 2210633).